We begin with the raw amino-acid sequence, 501 residues long: Protein translocase subunit SecD (501 aa).

Helical transmembrane passes span 9–29, 339–359, 371–391, 394–414, 447–467, and 470–490; these read NLWL…YAVV, AIEQ…VVLI, ISIF…GATL, PGIA…VLIF, VTLL…VKGF, and TLAL…KVFL.

It belongs to the SecD/SecF family. SecD subfamily. Forms a complex with SecF. Part of the essential Sec protein translocation apparatus which comprises SecA, SecYEG and auxiliary proteins SecDF. Other proteins may also be involved.

It localises to the cell inner membrane. Part of the Sec protein translocase complex. Interacts with the SecYEG preprotein conducting channel. SecDF uses the proton motive force (PMF) to complete protein translocation after the ATP-dependent function of SecA. The protein is Protein translocase subunit SecD of Aquifex aeolicus (strain VF5).